We begin with the raw amino-acid sequence, 150 residues long: uncharacterized protein (150 aa).

The HTH asnC-type domain maps to 5 to 66 (LDKVDRRLLE…KPNYKKLNLG (62 aa)). The H-T-H motif DNA-binding region spans 24–43 (IATLSKKLGIPRTTVHYRIK).

This is an uncharacterized protein from Pyrococcus abyssi (strain GE5 / Orsay).